A 725-amino-acid polypeptide reads, in one-letter code: Exocyst complex component 8 (725 aa).

Residue serine 19 is modified to Phosphoserine. Residues 137–159 (AGFFSTPGGASRDGSGPGEEGKQ) form a disordered region. The residue at position 142 (threonine 142) is a Phosphothreonine. One can recognise a PH domain in the interval 182–282 (YLVYNGDLVE…WLEVLEDTKR (101 aa)). The tract at residues 285 to 328 (SEKRRREQEEAAAPRGPPQVTSKATNPFEDDEEEEPAVPEVEEE) is disordered. Residues 312 to 328 (FEDDEEEEPAVPEVEEE) are compositionally biased toward acidic residues.

This sequence belongs to the EXO84 family. In terms of assembly, the exocyst complex is composed of EXOC1, EXOC2, EXOC3, EXOC4, EXOC5, EXOC6, EXOC7 and EXOC8. Interacts (via PH domain) with GTP-bound RALA and RALB. Interacts with SH3BP1; required for the localization of both SH3BP1 and the exocyst to the leading edge of migrating cells.

It is found in the cytoplasm. Its subcellular location is the perinuclear region. It localises to the cell projection. The protein localises to the growth cone. In terms of biological role, component of the exocyst complex involved in the docking of exocytic vesicles with fusion sites on the plasma membrane. This Homo sapiens (Human) protein is Exocyst complex component 8 (EXOC8).